The sequence spans 676 residues: Probable potassium transport system protein Kup (676 aa).

The next 12 membrane-spanning stretches (helical) occupy residues 14–34 (GLLIAIGIVYGDIGTSPLYVM), 56–76 (ISLILWTVTLLTTVQTVIIAL), 97–117 (AAWLVWPALIGGAAILADGTL), 142–162 (VSNQTTVLVITIVILLVLFSI), 173–193 (AFGPIMLVWFAFLGVMGLINI), 219–239 (AGFAILGSIFLATTGAEALYS), 252–272 (SWPFVFVCLSLNYFGQGVWIL), 296–316 (LASIVLATLAAIIASQALITG), 345–365 (IYIPAVNKMLGITTIALVLFF), 376–396 (GLSITISMLTTTILLYEWLVL), 402–422 (LANLLFVIFFSTINILFMGSS), and 429–449 (GGYVSLLITLLIASVMVVWYF).

Belongs to the HAK/KUP transporter (TC 2.A.72) family.

The protein localises to the cell membrane. It catalyses the reaction K(+)(in) + H(+)(in) = K(+)(out) + H(+)(out). Functionally, transport of potassium into the cell. Likely operates as a K(+):H(+) symporter. This is Probable potassium transport system protein Kup from Lactobacillus delbrueckii subsp. bulgaricus (strain ATCC BAA-365 / Lb-18).